A 172-amino-acid polypeptide reads, in one-letter code: Methylated-DNA--protein-cysteine methyltransferase (172 aa).

The active-site Nucleophile; methyl group acceptor is C142.

Belongs to the MGMT family.

The protein resides in the cytoplasm. It carries out the reaction a 6-O-methyl-2'-deoxyguanosine in DNA + L-cysteinyl-[protein] = S-methyl-L-cysteinyl-[protein] + a 2'-deoxyguanosine in DNA. The catalysed reaction is a 4-O-methyl-thymidine in DNA + L-cysteinyl-[protein] = a thymidine in DNA + S-methyl-L-cysteinyl-[protein]. Involved in the cellular defense against the biological effects of O6-methylguanine (O6-MeG) and O4-methylthymine (O4-MeT) in DNA. Repairs the methylated nucleobase in DNA by stoichiometrically transferring the methyl group to a cysteine residue in the enzyme. This is a suicide reaction: the enzyme is irreversibly inactivated. This is Methylated-DNA--protein-cysteine methyltransferase from Pyrococcus abyssi (strain GE5 / Orsay).